The primary structure comprises 84 residues: Acetylcholine receptor subunit alpha (84 aa).

Cys7 and Cys21 are oxidised to a cystine. N-linked (GlcNAc...) asparagine glycosylation is found at Asn20 and Asn66. The cysteines at positions 71 and 72 are disulfide-linked.

Belongs to the ligand-gated ion channel (TC 1.A.9) family. Acetylcholine receptor (TC 1.A.9.1) subfamily. Alpha-1/CHRNA1 sub-subfamily. As to quaternary structure, one of the alpha chains that assemble within the acetylcholine receptor, a pentamer of two alpha chains, a beta, a delta, and a gamma (in immature muscle) or epsilon (in mature muscle) chains. The muscle heteropentamer composed of alpha-1, beta-1, delta, epsilon subunits interacts with the alpha-conotoxin ImII.

It is found in the postsynaptic cell membrane. The protein localises to the cell membrane. The enzyme catalyses K(+)(in) = K(+)(out). The catalysed reaction is Na(+)(in) = Na(+)(out). In terms of biological role, upon acetylcholine binding, the AChR responds by an extensive change in conformation that affects all subunits and leads to opening of an ion-conducting channel across the plasma membrane. The protein is Acetylcholine receptor subunit alpha (CHRNA1) of Herpestes ichneumon (Egyptian mongoose).